The primary structure comprises 216 residues: Ribosomal RNA large subunit methyltransferase E (216 aa).

Positions 60, 62, 80, 96, and 121 each coordinate S-adenosyl-L-methionine. Lys161 (proton acceptor) is an active-site residue.

Belongs to the class I-like SAM-binding methyltransferase superfamily. RNA methyltransferase RlmE family.

The protein resides in the cytoplasm. It catalyses the reaction uridine(2552) in 23S rRNA + S-adenosyl-L-methionine = 2'-O-methyluridine(2552) in 23S rRNA + S-adenosyl-L-homocysteine + H(+). In terms of biological role, specifically methylates the uridine in position 2552 of 23S rRNA at the 2'-O position of the ribose in the fully assembled 50S ribosomal subunit. The sequence is that of Ribosomal RNA large subunit methyltransferase E from Pseudomonas savastanoi pv. phaseolicola (strain 1448A / Race 6) (Pseudomonas syringae pv. phaseolicola (strain 1448A / Race 6)).